Consider the following 404-residue polypeptide: Adenylosuccinate synthetase (404 aa).

GTP contacts are provided by residues 12-18 (GDEGKGK) and 40-42 (GHT). D13 acts as the Proton acceptor in catalysis. Residues D13 and G40 each coordinate Mg(2+). Residues 13 to 16 (DEGK), 38 to 41 (NAGH), T121, R135, Q213, T228, and R296 contribute to the IMP site. H41 acts as the Proton donor in catalysis. 292-298 (TTTGRAR) is a substrate binding site. GTP contacts are provided by residues R298, 324-326 (KMD), and 389-391 (SCG).

The protein belongs to the adenylosuccinate synthetase family. In terms of assembly, homodimer. It depends on Mg(2+) as a cofactor.

The protein resides in the cytoplasm. The catalysed reaction is IMP + L-aspartate + GTP = N(6)-(1,2-dicarboxyethyl)-AMP + GDP + phosphate + 2 H(+). The protein operates within purine metabolism; AMP biosynthesis via de novo pathway; AMP from IMP: step 1/2. Its function is as follows. Plays an important role in the de novo pathway of purine nucleotide biosynthesis. Catalyzes the first committed step in the biosynthesis of AMP from IMP. The protein is Adenylosuccinate synthetase of Deinococcus geothermalis (strain DSM 11300 / CIP 105573 / AG-3a).